Consider the following 932-residue polypeptide: Myelin gene regulatory factor-like A (932 aa).

Composition is skewed to low complexity over residues 1 to 19 and 33 to 48; these read MDGYNQQQQQQQQQQQQHQ and QQQQQQQQQQQQQQQQ. Disordered regions lie at residues 1-63, 152-256, 269-328, 540-568, 582-601, 613-660, and 680-726; these read MDGY…ISNG, VNSP…LSSS, TNTQ…NENP, VTPPGDLSPVHTPDYAGTSSNNGGGSNNM, TMNIVSPGHSPTSPRPLSQL, TQNH…NNNN, and NINN…CHWN. Residues 49–59 are compositionally biased toward polar residues; sequence PMNGSNNQLLG. Positions 127-154 form a coiled coil; that stretch reads LDSSFLMLQQQLQDQQQQIAQFNSSVNS. Low complexity-rich tracts occupy residues 152–249 and 277–294; these read VNSP…ANNT and PRSISPNPSPNLSPTNSP. Positions 286–546 form a DNA-binding region, NDT80; the sequence is PNLSPTNSPI…ATQVTPPGDL (261 aa). Over residues 311–328 the composition is skewed to polar residues; that stretch reads ENENSDPPSPMTQYNENP. Low complexity-rich tracts occupy residues 615-660 and 680-721; these read NHNN…NNNN and NINN…NNNN. In terms of domain architecture, Peptidase S74 spans 767–877; the sequence is SDLRIKYDLK…KQMDEMKLKL (111 aa). A coiled-coil region spans residues 863–895; the sequence is TQELSKQMDEMKLKLITYESKLKNLKKKSKNQT. A helical transmembrane segment spans residues 895-915; the sequence is TILLIIFMITFLLVALYMYKP.

It localises to the membrane. Functionally, transcription factor which acts as a key regulator of pstA (prestalk-A) cells differentiation. Essential for ecmA-specific gene expression. The protein is Myelin gene regulatory factor-like A (mrfA) of Dictyostelium discoideum (Social amoeba).